We begin with the raw amino-acid sequence, 192 residues long: Group XIIA secretory phospholipase A2 (192 aa).

An N-terminal signal peptide occupies residues 1 to 25 (MVTPRPAPARSPALLLLLLLATARG). Ca(2+) is bound by residues G91, P93, and F95. The active site involves H113. D114 lines the Ca(2+) pocket. D128 is a catalytic residue.

It belongs to the phospholipase A2 family. Requires Ca(2+) as cofactor.

It localises to the secreted. It is found in the cytoplasm. It carries out the reaction a 1,2-diacyl-sn-glycero-3-phosphocholine + H2O = a 1-acyl-sn-glycero-3-phosphocholine + a fatty acid + H(+). PA2 catalyzes the calcium-dependent hydrolysis of the 2-acyl groups in 3-sn-phosphoglycerides. Does not exhibit detectable activity toward sn-2-arachidonoyl- or linoleoyl-phosphatidylcholine or -phosphatidylethanolamine. In Mus musculus (Mouse), this protein is Group XIIA secretory phospholipase A2 (Pla2g12a).